The following is an 834-amino-acid chain: Ras GTPase-activating protein 3 (834 aa).

C2 domains follow at residues 1-112 and 123-263; these read MAVE…DTWF and VQGK…EAWY. Ala-2 carries the post-translational modification N-acetylalanine. Tyr-66 carries the post-translational modification Phosphotyrosine. Residue Ser-77 is modified to Phosphoserine. Position 110 is a phosphothreonine (Thr-110). One can recognise a Ras-GAP domain in the interval 346–561; the sequence is GRVVPFISAI…DAVKNFLDLI (216 aa). The PH domain maps to 576–677; sequence ILLKEGFMIK…WIDILTKVSQ (102 aa). The segment at 679-715 adopts a Btk-type zinc-finger fold; that stretch reads NQKRLTVFHPSAYLNGHWLCCRASSDTAIGCTPCTGG. Residues His-687, Cys-698, Cys-699, and Cys-709 each contribute to the Zn(2+) site. Phosphoserine occurs at positions 809 and 833.

In terms of biological role, inhibitory regulator of the Ras-cyclic AMP pathway. Binds inositol tetrakisphosphate (IP4). In Rattus norvegicus (Rat), this protein is Ras GTPase-activating protein 3 (Rasa3).